A 679-amino-acid polypeptide reads, in one-letter code: MSAPKNEMYYSLLEWFKTLNLNAPHADAESLADGVALAQALNQFAPESFTDAWLSKIKASAVGSNWRLRMSNLKKVTQSVYDYYSDVLNYSLSDFSKPDLQRIAEKCDLGELERLLQLVLGCAVNCAEKQSYITEIMCLEEELQANIMRALQELEATRQASTPEGGVASSLSRGSRTGLLDSKAVQEDRDALAQKCFETEKKMLLLIDEKTNLQQELHKLQQEFARLEQHSTVIGDDGVSLGPVQTGSVRYNELRRQLDLLKEELLQSEGAREDLKIKAQQQDTDLLHMQMRIEELMKSSAEVTTLKDEVDVLRESNDKLKICEAQLDTYKKKLEDYNDLKKQVKILEERSADYVQQNAQFEEDAKRYANTKGQVELFKKEIQDLHAKLDAESSKNVKLEFDNKNLEGKNLALQRAKDSLLKERDNLREAVDELKCGQLSSNTALTGTTVSRELQPSATVEKLQRLEAENKALREGQGGQTALAQLLDDANKRCENLREQLKTANERILSLSHASQSDDPILKESEFGKQIKQLMELNEQKTLQLEEAVTQSTSLQCKVTQLETNLSAREQEILVYDAKYRKCVEKAKEVIKSIDPRIASALDASVLEKSADLVEAEPKPKMSVMEEQLMTSAFYRLGVNAQRDAIDSKLAILMGSGQTFLARQRQSAPRKSLSAMKSK.

A Calponin-homology (CH) domain is found at 6–123 (NEMYYSLLEW…RLLQLVLGCA (118 aa)). 2 coiled-coil regions span residues 135 to 437 (EIMC…LKCG) and 480 to 574 (QTAL…QEIL).

The protein belongs to the hook family. Homodimer. Interacts with microtubules via its N-terminus.

The protein resides in the cytoplasm. Its subcellular location is the cytoskeleton. It localises to the endosome. The protein localises to the synapse. Involved in endocytic trafficking by stabilizing organelles of the endocytic pathway. Probably acts as a cytoskeletal linker protein required to tether endosome vesicles to the cytoskeleton. Involved in modulation of endocytosis at stages required for down-regulation of membrane proteins that control synapse size. Not involved in synaptic vesicle recycling. Required in R7 cells for boss endocytosis into multivesicular bodies (MVBs). Has a role in regulating adult longevity. This chain is Protein hook, found in Drosophila sechellia (Fruit fly).